The chain runs to 249 residues: Caffeoyl-CoA O-methyltransferase (249 aa).

K21 contributes to the substrate binding site. S-adenosyl-L-methionine is bound by residues T63, E85, 87–88, S93, D111, and A140; that span reads GV. Position 162 (D162) interacts with substrate. D162 provides a ligand contact to a divalent metal cation. Residue D164 coordinates S-adenosyl-L-methionine. The a divalent metal cation site is built by D188 and N189. N193 is a binding site for substrate.

The protein belongs to the class I-like SAM-binding methyltransferase superfamily. Cation-dependent O-methyltransferase family. CCoAMT subfamily. Homodimer. The cofactor is a divalent metal cation.

The catalysed reaction is (E)-caffeoyl-CoA + S-adenosyl-L-methionine = (E)-feruloyl-CoA + S-adenosyl-L-homocysteine + H(+). Its pathway is aromatic compound metabolism; phenylpropanoid biosynthesis. In terms of biological role, methylates caffeoyl-CoA to feruloyl-CoA and 5-hydroxyferuloyl-CoA to sinapoyl-CoA. Plays a role in the synthesis of feruloylated polysaccharides. Involved in the reinforcement of the plant cell wall. Also involved in the responding to wounding or pathogen challenge by the increased formation of cell wall-bound ferulic acid polymers. The sequence is that of Caffeoyl-CoA O-methyltransferase from Eucalyptus gunnii (Cider gum).